The chain runs to 173 residues: U4/U6.U5 small nuclear ribonucleoprotein component snu23 (173 aa).

A Matrin-type zinc finger spans residues 55–85 (WYCEACNETYKDSLSWLDHLNSTQHLRKTRT). Residues 119 to 149 (SLKERVERYHQELEAKKLRRKQKKVNKEKNS) are a coiled coil.

In terms of assembly, component of the 25S U4/U6.U5 tri-snRNP particle, a subcomplex of the spliceosome.

It localises to the cytoplasm. The protein localises to the cytoskeleton. Its subcellular location is the microtubule organizing center. The protein resides in the spindle pole body. It is found in the nucleus. The protein is U4/U6.U5 small nuclear ribonucleoprotein component snu23 (snu23) of Schizosaccharomyces pombe (strain 972 / ATCC 24843) (Fission yeast).